Reading from the N-terminus, the 596-residue chain is Meiosis-specific protein ASY1 (596 aa).

The HORMA domain occupies 15–228 (QDSLLLTRNL…SKHLVLTLKV (214 aa)). A disordered region spans residues 235 to 303 (CEDENDDMQD…NTQDPAENEQ (69 aa)). Residues 282-295 (QDDDDGEVDEDDNT) are compositionally biased toward acidic residues. In terms of domain architecture, SWIRM spans 351–449 (SKTGKDMYIK…ASSNRRLGKR (99 aa)). A disordered region spans residues 562 to 596 (TVNCSQASQDRRGRKTSMVREPILQYSKRQKSQAN).

Interacts with ASY3.

It localises to the chromosome. The protein localises to the nucleus. Required for normal meiosis in male and female gametophytes. Plays a crucial role in coordinating the activity of DMC1, a key member of the homologous recombination machinery. Acts at the interface between the developing chromosome axes and the recombination machinery to ensure DMC1-mediated interhomolog recombination. This Arabidopsis thaliana (Mouse-ear cress) protein is Meiosis-specific protein ASY1.